Reading from the N-terminus, the 86-residue chain is DNA replication protein 1 (86 aa).

Positions 38–67 (LELEKKMTKLEHENKLMKNALYELSRMENN) form a coiled coil.

Belongs to the phi29likevirus DNA replication protein 1 family. As to quaternary structure, homomultimer. Self-associates into large complexes forming long filamentous structures. Interacts (via N-terminus) with the primer terminal protein. Interacts with host FtsZ protein.

It localises to the host membrane. In terms of biological role, protein that assembles into highly ordered structures and provides a specific site for viral DNA replication. Probably anchors the viral DNA replisome to the host membrane. The sequence is that of DNA replication protein 1 (1) from Bacillus subtilis (Bacteriophage phi-29).